The chain runs to 125 residues: uncharacterized protein (125 aa).

A helical transmembrane segment spans residues 10 to 26 (IIILVCLMFLAIMVYIY).

The protein resides in the membrane. This is an uncharacterized protein from Rickettsia prowazekii (strain Madrid E).